Here is a 90-residue protein sequence, read N- to C-terminus: Phosphocarrier protein NPr (90 aa).

An HPr domain is found at Thr2–Asp90. The Pros-phosphohistidine intermediate role is filled by His16.

Belongs to the HPr family.

The protein resides in the cytoplasm. Component of the phosphoenolpyruvate-dependent nitrogen-metabolic phosphotransferase system (nitrogen-metabolic PTS), that seems to be involved in regulating nitrogen metabolism. The phosphoryl group from phosphoenolpyruvate (PEP) is transferred to the phosphoryl carrier protein NPr by enzyme I-Ntr. Phospho-NPr then transfers it to EIIA-Ntr. Could function in the transcriptional regulation of sigma-54 dependent operons in conjunction with the NPr (PtsO) and EIIA-Ntr (PtsN) proteins. The protein is Phosphocarrier protein NPr (ptsO) of Klebsiella oxytoca.